The primary structure comprises 438 residues: DEAD-box ATP-dependent RNA helicase CshB (438 aa).

A Q motif motif is present at residues 4 to 32; the sequence is TKFELYELKPFIIDAVHRLGFYEPTDIQK. Positions 35 to 208 constitute a Helicase ATP-binding domain; sequence IPAVLKKESV…KKYMENPKYA (174 aa). ATP is bound at residue 48 to 55; the sequence is SQTGTGKT. Residues 156–159 carry the DEAD box motif; it reads DEAD. In terms of domain architecture, Helicase C-terminal spans 235–385; that stretch reads LLFDIMSHLN…EWKKGDDRQR (151 aa). The interval 380–438 is disordered; that stretch reads GDDRQRRKKRKKTPNEADEIAHRLVKKPKKVKPGYKKKMSYEMEKIKKKQRRNQSKKRK. Residues 392 to 401 are compositionally biased toward basic and acidic residues; sequence TPNEADEIAH. 2 stretches are compositionally biased toward basic residues: residues 402–417 and 425–438; these read RLVK…YKKK and IKKK…KKRK.

This sequence belongs to the DEAD box helicase family. As to quaternary structure, interacts with CspB when cells are transcriptionally active. May interact with RNA helicases CshA and DbpA (DeaD), may be a component of a possible RNA degradosome complex composed of rny, rnja, rnjb, pnp, pfkA and eno (although rnjA and rnjB's presence is unclear). Specifically interacts with pnp and rny.

It is found in the cytoplasm. Its subcellular location is the nucleoid. It catalyses the reaction ATP + H2O = ADP + phosphate + H(+). Its function is as follows. DEAD-box RNA helicase that plays a role in 70S ribosome assembly. May work in conjunction with the cold shock proteins to ensure proper initiation of transcription at low and optimal temperatures. The protein is DEAD-box ATP-dependent RNA helicase CshB of Bacillus subtilis (strain 168).